The sequence spans 296 residues: Cytidine deaminase (296 aa).

CMP/dCMP-type deaminase domains are found at residues 47 to 167 and 186 to 296; these read DSHE…FGPA and ESDD…VDPV. Substrate is bound at residue 88–90; that stretch reads NLE. Residue His-101 coordinates Zn(2+). Glu-103 serves as the catalytic Proton donor. Zn(2+)-binding residues include Cys-128 and Cys-131.

Belongs to the cytidine and deoxycytidylate deaminase family. As to quaternary structure, homodimer. The cofactor is Zn(2+).

The catalysed reaction is cytidine + H2O + H(+) = uridine + NH4(+). It carries out the reaction 2'-deoxycytidine + H2O + H(+) = 2'-deoxyuridine + NH4(+). Its function is as follows. This enzyme scavenges exogenous and endogenous cytidine and 2'-deoxycytidine for UMP synthesis. The sequence is that of Cytidine deaminase from Shewanella amazonensis (strain ATCC BAA-1098 / SB2B).